Here is a 284-residue protein sequence, read N- to C-terminus: UDP-N-acetylenolpyruvoylglucosamine reductase (284 aa).

The 163-residue stretch at 12–174 (KIGGRVKYLV…TRVMMSFKRE (163 aa)) folds into the FAD-binding PCMH-type domain. The active site involves R153. The active-site Proton donor is the S203. E274 is a catalytic residue.

It belongs to the MurB family. FAD serves as cofactor.

It is found in the cytoplasm. The catalysed reaction is UDP-N-acetyl-alpha-D-muramate + NADP(+) = UDP-N-acetyl-3-O-(1-carboxyvinyl)-alpha-D-glucosamine + NADPH + H(+). The protein operates within cell wall biogenesis; peptidoglycan biosynthesis. In terms of biological role, cell wall formation. The polypeptide is UDP-N-acetylenolpyruvoylglucosamine reductase (Thermotoga petrophila (strain ATCC BAA-488 / DSM 13995 / JCM 10881 / RKU-1)).